Consider the following 175-residue polypeptide: B9 domain-containing protein 2 (175 aa).

Positions 2–118 (AEVHVIGQII…DCPTWRPLGS (117 aa)) constitute a C2 B9-type domain.

This sequence belongs to the B9D family. As to quaternary structure, part of the tectonic-like complex (also named B9 complex). Interacts with TUBG1.

Its subcellular location is the cytoplasm. The protein localises to the cytoskeleton. It localises to the cilium basal body. The protein resides in the cilium axoneme. It is found in the nucleus. Its function is as follows. Component of the tectonic-like complex, a complex localized at the transition zone of primary cilia and acting as a barrier that prevents diffusion of transmembrane proteins between the cilia and plasma membranes. This is B9 domain-containing protein 2 (B9d2) from Rattus norvegicus (Rat).